The primary structure comprises 261 residues: MELQLTGKESGWWIVSHENKLWLPKGELPQGNAANWSLQGATARQIGEWQGQAVWLIRQMMSTDMGSVRQLLDVDRGLFQLAGRGVQLAEFYRSHRYCGYCGHQMHASRTEWACLCNHCRERYYPQIAPCVIVAIRRGDEILLAQHVRHRGGINTVLAGFVEVGETLEQAVSREVLEESNIHIKNLRYVTSQPWPFPHSLMMAFMAEYDSGELRHDPKELLNAGWYRYDQLPLLPPPGTVARRLIEDTVVLCREEQFDDGE.

Substrate contacts are provided by Lys25 and Arg69. Zn(2+) is bound by residues Cys98 and Cys101. Glu111 lines the substrate pocket. Residues Cys116 and Cys119 each contribute to the Zn(2+) site. A substrate-binding site is contributed by Tyr124. A Nudix hydrolase domain is found at 125–248 (PQIAPCVIVA…TVARRLIEDT (124 aa)). Residues Ala158, Glu174, and Glu178 each coordinate a divalent metal cation. The Nudix box signature appears at 159 to 180 (GFVEVGETLEQAVSREVLEESN). 192–199 (QPWPFPHS) contacts substrate. A divalent metal cation is bound at residue Glu219. Ala241 is a substrate binding site.

The protein belongs to the Nudix hydrolase family. NudC subfamily. As to quaternary structure, homodimer. The cofactor is Mg(2+). Mn(2+) serves as cofactor. Requires Zn(2+) as cofactor.

The catalysed reaction is a 5'-end NAD(+)-phospho-ribonucleoside in mRNA + H2O = a 5'-end phospho-adenosine-phospho-ribonucleoside in mRNA + beta-nicotinamide D-ribonucleotide + 2 H(+). It catalyses the reaction NAD(+) + H2O = beta-nicotinamide D-ribonucleotide + AMP + 2 H(+). The enzyme catalyses NADH + H2O = reduced beta-nicotinamide D-ribonucleotide + AMP + 2 H(+). Functionally, mRNA decapping enzyme that specifically removes the nicotinamide adenine dinucleotide (NAD) cap from a subset of mRNAs by hydrolyzing the diphosphate linkage to produce nicotinamide mononucleotide (NMN) and 5' monophosphate mRNA. The NAD-cap is present at the 5'-end of some mRNAs and stabilizes RNA against 5'-processing. Has preference for mRNAs with a 5'-end purine. Catalyzes the hydrolysis of a broad range of dinucleotide pyrophosphates. This Yersinia enterocolitica serotype O:8 / biotype 1B (strain NCTC 13174 / 8081) protein is NAD-capped RNA hydrolase NudC.